The sequence spans 107 residues: U1-lycotoxin-Ls1n (107 aa).

The first 20 residues, 1-20, serve as a signal peptide directing secretion; the sequence is MMKVLVVVALLVTLISYSSS. A propeptide spanning residues 21 to 41 is cleaved from the precursor; the sequence is EGIDDLEADELLSLMANEQTR. Intrachain disulfides connect Cys-44–Cys-59, Cys-51–Cys-68, Cys-58–Cys-86, and Cys-70–Cys-84.

It belongs to the neurotoxin 19 (CSTX) family. 04 (U1-Lctx) subfamily. Expressed by the venom gland.

The protein localises to the secreted. This chain is U1-lycotoxin-Ls1n, found in Lycosa singoriensis (Wolf spider).